A 170-amino-acid chain; its full sequence is MRRIFLIGYMGAGKTTIGKILAEKLNLSFIDTDFFIKNRYKKEITDIFAGEGEEKFRRIEQKILQEIIQKWENIVISTGGGTPCFFHNMELMNASGTTVYLKATIELLTERLINMKCARPLIKDKSPEEIKYFVINNLVKRELFYNQASIVFFIKKMTMNDIIENLMPKI.

11–16 serves as a coordination point for ATP; that stretch reads GAGKTT. Thr-15 provides a ligand contact to Mg(2+). Substrate is bound by residues Asp-33, Arg-57, and Gly-80. An ATP-binding site is contributed by Arg-119. Residue Arg-141 participates in substrate binding.

Belongs to the shikimate kinase family. Monomer. Requires Mg(2+) as cofactor.

The protein localises to the cytoplasm. It carries out the reaction shikimate + ATP = 3-phosphoshikimate + ADP + H(+). It participates in metabolic intermediate biosynthesis; chorismate biosynthesis; chorismate from D-erythrose 4-phosphate and phosphoenolpyruvate: step 5/7. Its function is as follows. Catalyzes the specific phosphorylation of the 3-hydroxyl group of shikimic acid using ATP as a cosubstrate. This Azobacteroides pseudotrichonymphae genomovar. CFP2 protein is Shikimate kinase.